Consider the following 645-residue polypeptide: Cyclic nucleotide-gated channel rod photoreceptor subunit alpha (645 aa).

Residues methionine 1–leucine 121 lie on the Cytoplasmic side of the membrane. Residues asparagine 53–glutamate 100 are disordered. Basic and acidic residues predominate over residues serine 70 to lysine 86. The span at lysine 87 to lysine 96 shows a compositional bias: basic residues. The chain crosses the membrane as a helical span at residues phenylalanine 122–glutamate 143. Residues leucine 144 to phenylalanine 153 are Extracellular-facing. Residues isoleucine 154–glycine 174 form a helical membrane-spanning segment. At tyrosine 175–lysine 199 the chain is on the cytoplasmic side. Residues leucine 200–asparagine 218 form a helical membrane-spanning segment. Topologically, residues tyrosine 219–arginine 223 are extracellular. The helical transmembrane segment at isoleucine 224–threonine 242 threads the bilayer. The Cytoplasmic portion of the chain corresponds to arginine 243–isoleucine 249. Residues phenylalanine 250–isoleucine 273 traverse the membrane as a helical segment. The Extracellular portion of the chain corresponds to serine 274–arginine 296. 2 helical membrane passes run leucine 297 to valine 331 and valine 332 to asparagine 356. Over alanine 357–glutamate 645 the chain is Cytoplasmic. Residues leucine 439–leucine 561, glutamate 498, and arginine 513 each bind 3',5'-cyclic GMP.

Belongs to the cyclic nucleotide-gated cation channel (TC 1.A.1.5) family.

The protein resides in the membrane. In terms of biological role, visual signal transduction is mediated by a G-protein coupled cascade using cGMP as second messenger. This protein can be activated by cGMP which leads to an opening of the cation channel and thereby causing a depolarization of rod photoreceptors. This chain is Cyclic nucleotide-gated channel rod photoreceptor subunit alpha, found in Gallus gallus (Chicken).